We begin with the raw amino-acid sequence, 141 residues long: Large ribosomal subunit protein uL11 (141 aa).

This sequence belongs to the universal ribosomal protein uL11 family. As to quaternary structure, part of the ribosomal stalk of the 50S ribosomal subunit. Interacts with L10 and the large rRNA to form the base of the stalk. L10 forms an elongated spine to which L12 dimers bind in a sequential fashion forming a multimeric L10(L12)X complex. One or more lysine residues are methylated.

Functionally, forms part of the ribosomal stalk which helps the ribosome interact with GTP-bound translation factors. This chain is Large ribosomal subunit protein uL11, found in Streptococcus mutans serotype c (strain ATCC 700610 / UA159).